The sequence spans 398 residues: S-adenosylmethionine synthase (398 aa).

ATP is bound at residue His-16. Residue Asp-18 coordinates Mg(2+). Glu-51 contributes to the K(+) binding site. L-methionine contacts are provided by Glu-64 and Gln-108. Residues Gln-108 to Ala-118 are flexible loop. Residues Asp-176–Lys-178, Lys-242–Phe-243, Asp-251, Arg-257–Lys-258, Ala-274, and Lys-278 each bind ATP. Asp-251 contacts L-methionine. An L-methionine-binding site is contributed by Lys-282.

The protein belongs to the AdoMet synthase family. As to quaternary structure, homotetramer; dimer of dimers. It depends on Mg(2+) as a cofactor. K(+) serves as cofactor.

The protein localises to the cytoplasm. It carries out the reaction L-methionine + ATP + H2O = S-adenosyl-L-methionine + phosphate + diphosphate. It participates in amino-acid biosynthesis; S-adenosyl-L-methionine biosynthesis; S-adenosyl-L-methionine from L-methionine: step 1/1. Catalyzes the formation of S-adenosylmethionine (AdoMet) from methionine and ATP. The overall synthetic reaction is composed of two sequential steps, AdoMet formation and the subsequent tripolyphosphate hydrolysis which occurs prior to release of AdoMet from the enzyme. The chain is S-adenosylmethionine synthase from Bradyrhizobium diazoefficiens (strain JCM 10833 / BCRC 13528 / IAM 13628 / NBRC 14792 / USDA 110).